Reading from the N-terminus, the 591-residue chain is L-fucose isomerase (591 aa).

Catalysis depends on proton acceptor residues E338 and D362. Mn(2+)-binding residues include E338, D362, and H529.

This sequence belongs to the L-fucose isomerase family. Mn(2+) is required as a cofactor.

The protein resides in the cytoplasm. The catalysed reaction is L-fucose = L-fuculose. It functions in the pathway carbohydrate degradation; L-fucose degradation; L-lactaldehyde and glycerone phosphate from L-fucose: step 1/3. Converts the aldose L-fucose into the corresponding ketose L-fuculose. This is L-fucose isomerase from Bacteroides thetaiotaomicron (strain ATCC 29148 / DSM 2079 / JCM 5827 / CCUG 10774 / NCTC 10582 / VPI-5482 / E50).